The primary structure comprises 103 residues: Large ribosomal subunit protein bL21 (103 aa).

Belongs to the bacterial ribosomal protein bL21 family. As to quaternary structure, part of the 50S ribosomal subunit. Contacts protein L20.

This protein binds to 23S rRNA in the presence of protein L20. This Aliivibrio fischeri (strain ATCC 700601 / ES114) (Vibrio fischeri) protein is Large ribosomal subunit protein bL21.